We begin with the raw amino-acid sequence, 299 residues long: Biphenyl-2,3-diol 1,2-dioxygenase (299 aa).

2 VOC domains span residues Glu-6–Gly-121 and Gly-146–Gly-267. The Fe cation site is built by His-149, His-212, and Glu-263.

It belongs to the extradiol ring-cleavage dioxygenase family. Homooctamer. Fe(2+) is required as a cofactor.

It carries out the reaction biphenyl-2,3-diol + O2 = 2-hydroxy-6-oxo-6-phenylhexa-2,4-dienoate + H(+). Its pathway is xenobiotic degradation; biphenyl degradation; 2-hydroxy-2,4-pentadienoate and benzoate from biphenyl: step 3/4. The chain is Biphenyl-2,3-diol 1,2-dioxygenase (bphC) from Sphingomonas paucimobilis (Pseudomonas paucimobilis).